The following is a 62-amino-acid chain: Translational regulator CsrA 3 (62 aa).

Belongs to the CsrA/RsmA family. Homodimer; the beta-strands of each monomer intercalate to form a hydrophobic core, while the alpha-helices form wings that extend away from the core.

The protein localises to the cytoplasm. A key translational regulator that binds mRNA to regulate translation initiation and/or mRNA stability. Mediates global changes in gene expression, shifting from rapid growth to stress survival by linking envelope stress, the stringent response and the catabolite repression systems. Usually binds in the 5'-UTR; binding at or near the Shine-Dalgarno sequence prevents ribosome-binding, repressing translation, binding elsewhere in the 5'-UTR can activate translation and/or stabilize the mRNA. Its function is antagonized by small RNA(s). The chain is Translational regulator CsrA 3 from Pseudomonas syringae pv. tomato (strain ATCC BAA-871 / DC3000).